The chain runs to 513 residues: Ribonuclease Y (513 aa).

Residues 3-23 (IGTLLLFTFLGLVAGATAVWL) form a helical membrane-spanning segment. The disordered stretch occupies residues 77–96 (LQSVESKLKSREQTLNQRQE). Basic and acidic residues predominate over residues 82–96 (SKLKSREQTLNQRQE). Positions 203–263 (SVTVFHIESD…VRREIARLAL (61 aa)) constitute a KH domain. Residues 329-422 (LLQHSRETAN…VQVCDAISGA (94 aa)) enclose the HD domain.

This sequence belongs to the RNase Y family.

The protein localises to the cell membrane. Its function is as follows. Endoribonuclease that initiates mRNA decay. The polypeptide is Ribonuclease Y (Porphyromonas gingivalis (strain ATCC BAA-308 / W83)).